Reading from the N-terminus, the 276-residue chain is Non-homologous end joining protein Ku (276 aa).

The region spanning 11-177 (ISFGLVHIPI…PEEIRSMEPL (167 aa)) is the Ku domain. The interval 256–276 (QVKTQQKKEAAPKKERRRKTS) is disordered.

The protein belongs to the prokaryotic Ku family. As to quaternary structure, homodimer. Interacts with LigD.

Functionally, with LigD forms a non-homologous end joining (NHEJ) DNA repair enzyme, which repairs dsDNA breaks with reduced fidelity. Binds linear dsDNA with 5'- and 3'- overhangs but not closed circular dsDNA nor ssDNA. Recruits and stimulates the ligase activity of LigD. The chain is Non-homologous end joining protein Ku from Heliobacterium modesticaldum (strain ATCC 51547 / Ice1).